Here is a 615-residue protein sequence, read N- to C-terminus: Granule-bound starch synthase 1, chloroplastic/amyloplastic (615 aa).

Residues 1–70 (MAALVTSQLA…DRRCLSMVVR (70 aa)) constitute a chloroplast transit peptide. Lys-91 serves as a coordination point for ADP-alpha-D-glucose.

Belongs to the glycosyltransferase 1 family. Bacterial/plant glycogen synthase subfamily. As to expression, found in seeds and pollen.

The protein resides in the plastid. Its subcellular location is the chloroplast. It localises to the amyloplast. It carries out the reaction an NDP-alpha-D-glucose + [(1-&gt;4)-alpha-D-glucosyl](n) = [(1-&gt;4)-alpha-D-glucosyl](n+1) + a ribonucleoside 5'-diphosphate + H(+). Its pathway is glycan biosynthesis; starch biosynthesis. This Triticum aestivum (Wheat) protein is Granule-bound starch synthase 1, chloroplastic/amyloplastic (WAXY).